A 425-amino-acid chain; its full sequence is Monoacylglycerol lipase ABHD2 (425 aa).

Over 1–9 (MNAMLETPE) the chain is Cytoplasmic. A helical; Signal-anchor for type II membrane protein transmembrane segment spans residues 10–30 (LPAVFDGVKLAAVAAVLYVIV). Residues 31-425 (RCLNLKSPTA…DTEQMEAELE (395 aa)) lie on the Extracellular side of the membrane. The AB hydrolase-1 domain occupies 128–382 (MVICPGIANH…HGGHLGFFEG (255 aa)). N-linked (GlcNAc...) asparagine glycosylation occurs at Asn-136. The active-site Nucleophile is the Ser-207. Active-site charge relay system residues include Asp-345 and His-376. N-linked (GlcNAc...) asparagine glycosylation occurs at Asn-410.

It belongs to the AB hydrolase superfamily. AB hydrolase 4 family. Widely expressed with higher expression in testis. Expressed by vascular smooth muscle cells, non vascular smooth muscle cells and heart.

The protein localises to the cell membrane. It localises to the cytoplasmic vesicle. The protein resides in the secretory vesicle. Its subcellular location is the acrosome membrane. It carries out the reaction Hydrolyzes glycerol monoesters of long-chain fatty acids.. It catalyses the reaction an acetyl ester + H2O = an aliphatic alcohol + acetate + H(+). The enzyme catalyses a triacylglycerol + H2O = a diacylglycerol + a fatty acid + H(+). The catalysed reaction is 2-(5Z,8Z,11Z,14Z-eicosatetraenoyl)-glycerol + H2O = glycerol + (5Z,8Z,11Z,14Z)-eicosatetraenoate + H(+). It carries out the reaction a butanoate ester + H2O = an aliphatic alcohol + butanoate + H(+). It catalyses the reaction hexadecanoate ester + H2O = an aliphatic alcohol + hexadecanoate + H(+). Acylglycerol lipase activity is activated upon binding to progesterone. Its function is as follows. Progesterone-dependent acylglycerol lipase that catalyzes hydrolysis of endocannabinoid arachidonoylglycerol (AG) from cell membrane. Acts as a progesterone receptor: progesterone-binding activates the acylglycerol lipase activity, mediating degradation of 1-arachidonoylglycerol (1AG) and 2-arachidonoylglycerol (2AG) to glycerol and arachidonic acid (AA). Also displays an ester hydrolase activity against acetyl ester, butanoate ester and hexadecanoate ester. Plays a key role in sperm capacitation in response to progesterone by mediating degradation of 2AG, an inhibitor of the sperm calcium channel CatSper, leading to calcium influx via CatSper and sperm activation. Involved in acrosomal reaction. May also play a role in smooth muscle cells migration. The sequence is that of Monoacylglycerol lipase ABHD2 (Abhd2) from Mus musculus (Mouse).